The sequence spans 745 residues: Elongation factor G, mitochondrial (745 aa).

The tr-type G domain maps to 40 to 317; that stretch reads ERIRNIGISA…AVLDYLPNPG (278 aa). GTP is bound by residues 49-56, 116-120, and 170-173; these read AHIDSGKT, DTPGH, and NKLD.

This sequence belongs to the TRAFAC class translation factor GTPase superfamily. Classic translation factor GTPase family. EF-G/EF-2 subfamily.

It localises to the mitochondrion. It participates in protein biosynthesis; polypeptide chain elongation. Mitochondrial GTPase that catalyzes the GTP-dependent ribosomal translocation step during translation elongation. During this step, the ribosome changes from the pre-translocational (PRE) to the post-translocational (POST) state as the newly formed A-site-bound peptidyl-tRNA and P-site-bound deacylated tRNA move to the P and E sites, respectively. Catalyzes the coordinated movement of the two tRNA molecules, the mRNA and conformational changes in the ribosome. Essential during development as it acts as a retrograde signal from mitochondria to the nucleus to slow down cell proliferation if mitochondrial energy output is low. The protein is Elongation factor G, mitochondrial of Drosophila erecta (Fruit fly).